Reading from the N-terminus, the 205-residue chain is Cryptic plasmid protein C (205 aa).

The tract at residues 142-205 (THGYSDPDDP…RAGNAGKGRF (64 aa)) is disordered. Residues 155 to 174 (QSMTQAKDLPRNTQEAAQSI) show a composition bias toward polar residues. Basic residues predominate over residues 189–205 (QAKKPRRRAGNAGKGRF).

This chain is Cryptic plasmid protein C (cppC), found in Neisseria gonorrhoeae.